Consider the following 260-residue polypeptide: ProSAAS (260 aa).

An N-terminal signal peptide occupies residues methionine 1–serine 33. Residues alanine 34–proline 215 are proSAAS(1-180). 2 disordered regions span residues alanine 162–threonine 187 and serine 206–asparagine 234. The interval alanine 221 to proline 260 is C-terminal inhibitory domain; interacts with PCSK1. Residues leucine 239 to arginine 244 carry the Sufficient for inhibition of PCSK1 motif.

In terms of assembly, interacts via the C-terminal inhibitory domain with PCSK1 65 kDa form. Post-translationally, proteolytically cleaved in the Golgi. Big SAAS, Little SAAS, PEN and Big LEN are the major processed peptides in proSAAS-overexpressing PC-12 phaeochromocytoma cells (lacking PCSK1 and PCSK2 endopeptidases). Peptides corresponding to PEN and a proSAAS aa 40-59 have been detected in wild-type PC-12 cells. As to expression, expressed in adult brain (all major structural regions), adrenal gland (medulla) and spinal cord (dorsal and ventral horn). Expressed in pancreatic islands.

The protein localises to the secreted. The protein resides in the golgi apparatus. It is found in the trans-Golgi network. Functionally, may function in the control of the neuroendocrine secretory pathway. Proposed be a specific endogenous inhibitor of PCSK1. ProSAAS and Big PEN-LEN, both containing the C-terminal inhibitory domain, but not the processed peptides reduce PCSK1 activity in the endoplasmic reticulum and Golgi. It reduces the activity of the 87 kDa form but not the autocatalytically derived 65 kDa form of PCSK1. Subsequent processing of proSAAS may eliminate the inhibition. Slows down convertase-mediated processing of proopiomelanocortin and proenkephalin. May control the intracellular timing of PCSK1 rather than its total level of activity. In terms of biological role, endogenous ligand for GPR171. Neuropeptide involved in the regulation of feeding. In Rattus norvegicus (Rat), this protein is ProSAAS (Pcsk1n).